We begin with the raw amino-acid sequence, 241 residues long: Ubiquinone biosynthesis O-methyltransferase (241 aa).

Residues Arg-46, Gly-66, Asp-87, and Met-131 each coordinate S-adenosyl-L-methionine.

It belongs to the methyltransferase superfamily. UbiG/COQ3 family.

The enzyme catalyses a 3-demethylubiquinol + S-adenosyl-L-methionine = a ubiquinol + S-adenosyl-L-homocysteine + H(+). The catalysed reaction is a 3-(all-trans-polyprenyl)benzene-1,2-diol + S-adenosyl-L-methionine = a 2-methoxy-6-(all-trans-polyprenyl)phenol + S-adenosyl-L-homocysteine + H(+). Its pathway is cofactor biosynthesis; ubiquinone biosynthesis. Its function is as follows. O-methyltransferase that catalyzes the 2 O-methylation steps in the ubiquinone biosynthetic pathway. The polypeptide is Ubiquinone biosynthesis O-methyltransferase (Bordetella avium (strain 197N)).